The primary structure comprises 212 residues: NAD(P)H-hydrate epimerase (212 aa).

The YjeF N-terminal domain occupies 10 to 212 (MRSLERAAIA…IGVIVKPIGL (203 aa)). 65-69 (NNGGD) is a binding site for (6S)-NADPHX. K(+)-binding residues include asparagine 66 and aspartate 129. Residues 133–139 (GLGLTRP) and aspartate 161 contribute to the (6S)-NADPHX site. Residue serine 164 participates in K(+) binding.

It belongs to the NnrE/AIBP family. K(+) is required as a cofactor.

The catalysed reaction is (6R)-NADHX = (6S)-NADHX. It catalyses the reaction (6R)-NADPHX = (6S)-NADPHX. Functionally, catalyzes the epimerization of the S- and R-forms of NAD(P)HX, a damaged form of NAD(P)H that is a result of enzymatic or heat-dependent hydration. This is a prerequisite for the S-specific NAD(P)H-hydrate dehydratase to allow the repair of both epimers of NAD(P)HX. The chain is NAD(P)H-hydrate epimerase from Rhodobacter capsulatus (strain ATCC BAA-309 / NBRC 16581 / SB1003).